The sequence spans 205 residues: RPW8-like protein 2 (205 aa).

The RPW8 domain occupies 1-153; that stretch reads MPLTEIIAGA…IMGQPIDCII (153 aa). The chain crosses the membrane as a helical span at residues 7–23; sequence IAGAALGLALQILHEAI. 2 coiled-coil regions span residues 70-92 and 125-147; these read EDLK…LKRR and ADIK…IMGQ.

The protein belongs to the plant RPW8 protein family.

It is found in the membrane. In terms of biological role, probable disease resistance (R) protein. The protein is RPW8-like protein 2 of Arabidopsis thaliana (Mouse-ear cress).